Reading from the N-terminus, the 190-residue chain is Potassium-transporting ATPase KdpC subunit (190 aa).

A helical membrane pass occupies residues 13-33 (LLLILTLITGILYPIVTTGFA).

It belongs to the KdpC family. The system is composed of three essential subunits: KdpA, KdpB and KdpC.

Its subcellular location is the cell inner membrane. In terms of biological role, part of the high-affinity ATP-driven potassium transport (or Kdp) system, which catalyzes the hydrolysis of ATP coupled with the electrogenic transport of potassium into the cytoplasm. This subunit acts as a catalytic chaperone that increases the ATP-binding affinity of the ATP-hydrolyzing subunit KdpB by the formation of a transient KdpB/KdpC/ATP ternary complex. This is Potassium-transporting ATPase KdpC subunit from Leptospira interrogans serogroup Icterohaemorrhagiae serovar copenhageni (strain Fiocruz L1-130).